We begin with the raw amino-acid sequence, 227 residues long: Riboflavin kinase (227 aa).

The H-T-H motif-like stretch occupies residues 1 to 92 (MSKDYEVFPL…LKRTIDSSTF (92 aa)). Residues 93 to 227 (LTLRGYVVPG…GDKVEVVIPV (135 aa)) are riboflavin kinase. 102–107 (GLGEGA) provides a ligand contact to CDP. The Mg(2+) site is built by Thr131 and Asn133. Residues Thr194 and Glu202 each contribute to the FMN site. Residue 207-210 (VRLR) coordinates CDP.

The protein belongs to the archaeal riboflavin kinase family. Mg(2+) serves as cofactor.

It carries out the reaction riboflavin + CTP = CDP + FMN + H(+). It functions in the pathway cofactor biosynthesis; FMN biosynthesis; FMN from riboflavin (CTP route): step 1/1. In terms of biological role, catalyzes the CTP-dependent phosphorylation of riboflavin (vitamin B2) to form flavin mononucleotide (FMN). The sequence is that of Riboflavin kinase (ribK) from Thermofilum pendens (strain DSM 2475 / Hrk 5).